We begin with the raw amino-acid sequence, 193 residues long: Epididymal-specific lipocalin-12 (193 aa).

The signal sequence occupies residues 1–19 (MGPWWALWLILTLPQILES). A disulfide bond links Cys-88 and Cys-193. Asn-143 and Asn-172 each carry an N-linked (GlcNAc...) asparagine glycan.

The protein belongs to the calycin superfamily. Lipocalin family. As to quaternary structure, monomer. Expressed in epididymis.

The protein localises to the secreted. In terms of biological role, binds all-trans retinoic acid and may act as a retinoid carrier protein within the epididymis. May play a role in male fertility. The protein is Epididymal-specific lipocalin-12 (Lcn12) of Mus musculus (Mouse).